The following is an 87-amino-acid chain: Exodeoxyribonuclease 7 small subunit (87 aa).

The protein belongs to the XseB family. As to quaternary structure, heterooligomer composed of large and small subunits.

Its subcellular location is the cytoplasm. It catalyses the reaction Exonucleolytic cleavage in either 5'- to 3'- or 3'- to 5'-direction to yield nucleoside 5'-phosphates.. Bidirectionally degrades single-stranded DNA into large acid-insoluble oligonucleotides, which are then degraded further into small acid-soluble oligonucleotides. This Pelotomaculum thermopropionicum (strain DSM 13744 / JCM 10971 / SI) protein is Exodeoxyribonuclease 7 small subunit.